We begin with the raw amino-acid sequence, 187 residues long: Plasmodium-specific hydrophobic abundant protein (187 aa).

Positions methionine 1–alanine 18 are cleaved as a signal peptide.

It to HAP-S protein.

The protein resides in the membrane. This is Plasmodium-specific hydrophobic abundant protein from Physarum polycephalum (Slime mold).